The sequence spans 156 residues: ATP synthase subunit b (156 aa).

Residues alanine 11–alanine 31 traverse the membrane as a helical segment.

The protein belongs to the ATPase B chain family. As to quaternary structure, F-type ATPases have 2 components, F(1) - the catalytic core - and F(0) - the membrane proton channel. F(1) has five subunits: alpha(3), beta(3), gamma(1), delta(1), epsilon(1). F(0) has three main subunits: a(1), b(2) and c(10-14). The alpha and beta chains form an alternating ring which encloses part of the gamma chain. F(1) is attached to F(0) by a central stalk formed by the gamma and epsilon chains, while a peripheral stalk is formed by the delta and b chains.

Its subcellular location is the cell inner membrane. Functionally, f(1)F(0) ATP synthase produces ATP from ADP in the presence of a proton or sodium gradient. F-type ATPases consist of two structural domains, F(1) containing the extramembraneous catalytic core and F(0) containing the membrane proton channel, linked together by a central stalk and a peripheral stalk. During catalysis, ATP synthesis in the catalytic domain of F(1) is coupled via a rotary mechanism of the central stalk subunits to proton translocation. Its function is as follows. Component of the F(0) channel, it forms part of the peripheral stalk, linking F(1) to F(0). This is ATP synthase subunit b from Psychromonas ingrahamii (strain DSM 17664 / CCUG 51855 / 37).